Here is a 378-residue protein sequence, read N- to C-terminus: Alpha-D-ribose 1-methylphosphonate 5-triphosphate diphosphatase (378 aa).

Belongs to the metallo-dependent hydrolases superfamily.

The catalysed reaction is alpha-D-ribose 1-methylphosphonate 5-triphosphate + H2O = alpha-D-ribose 1-methylphosphonate 5-phosphate + diphosphate + H(+). Its function is as follows. Catalyzes the hydrolysis of alpha-D-ribose 1-methylphosphonate triphosphate (RPnTP) to form alpha-D-ribose 1-methylphosphonate phosphate (PRPn) and diphosphate. The polypeptide is Alpha-D-ribose 1-methylphosphonate 5-triphosphate diphosphatase (phnM) (Escherichia coli (strain K12)).